Consider the following 191-residue polypeptide: Ribosome maturation factor RimM (191 aa).

Residues 99–172 form the PRC barrel domain; the sequence is TDEFYQIDLI…FLVVDPVAAG (74 aa).

This sequence belongs to the RimM family. In terms of assembly, binds ribosomal protein uS19.

It localises to the cytoplasm. Functionally, an accessory protein needed during the final step in the assembly of 30S ribosomal subunit, possibly for assembly of the head region. Essential for efficient processing of 16S rRNA. May be needed both before and after RbfA during the maturation of 16S rRNA. It has affinity for free ribosomal 30S subunits but not for 70S ribosomes. The sequence is that of Ribosome maturation factor RimM from Bartonella bacilliformis (strain ATCC 35685 / KC583 / Herrer 020/F12,63).